Reading from the N-terminus, the 86-residue chain is RNA-binding protein Hfq (86 aa).

Positions 9-68 (DPYLNTLRKEKVGVSIYLVNGIKLQGTIESFDQFVILLKNTVSQMVYKHAISTVVPVRPI) constitute a Sm domain.

This sequence belongs to the Hfq family. In terms of assembly, homohexamer.

In terms of biological role, RNA chaperone that binds small regulatory RNA (sRNAs) and mRNAs to facilitate mRNA translational regulation in response to envelope stress, environmental stress and changes in metabolite concentrations. Also binds with high specificity to tRNAs. The polypeptide is RNA-binding protein Hfq (Pseudomonas fluorescens (strain Pf0-1)).